We begin with the raw amino-acid sequence, 313 residues long: Aspartate carbamoyltransferase catalytic subunit (313 aa).

Carbamoyl phosphate is bound by residues arginine 61 and threonine 62. An L-aspartate-binding site is contributed by lysine 89. Carbamoyl phosphate-binding residues include arginine 111, histidine 139, and glutamine 142. Arginine 172 and arginine 227 together coordinate L-aspartate. The carbamoyl phosphate site is built by glycine 268 and proline 269.

It belongs to the aspartate/ornithine carbamoyltransferase superfamily. ATCase family. Heterododecamer (2C3:3R2) of six catalytic PyrB chains organized as two trimers (C3), and six regulatory PyrI chains organized as three dimers (R2).

It carries out the reaction carbamoyl phosphate + L-aspartate = N-carbamoyl-L-aspartate + phosphate + H(+). The protein operates within pyrimidine metabolism; UMP biosynthesis via de novo pathway; (S)-dihydroorotate from bicarbonate: step 2/3. Catalyzes the condensation of carbamoyl phosphate and aspartate to form carbamoyl aspartate and inorganic phosphate, the committed step in the de novo pyrimidine nucleotide biosynthesis pathway. The sequence is that of Aspartate carbamoyltransferase catalytic subunit from Gluconobacter oxydans (strain 621H) (Gluconobacter suboxydans).